The sequence spans 426 residues: MASARESTPRYLTLIGATLACSALALGAAQAQTEPAEPEAPAETAAADAAGQTEGQRGAAEAAAALAAGEADEPVILEAPAPDARRVYIQDPAHFAAITQQFVIDGSTGRILGMTDGGFLPHPVAAEDGSFFAQASTVFERIARGKRTDYVEVFDPVTFLPIADIELPDAPRFLVGTYQWMNALTPDNKNLLFYQFSPAPAVGVVDLEGKTFDRMLDVPDCYHIFPASPTVFYMNCRDGSLARVDFADGETKVTNTEVFHTEDELLINHPAFSLRSGRLVWPTYTGKIFQADLTAEGATFRAPIEALTEAERADDWRPGGWQQTAYHRQSDRIYLLVDQRDEWKHKAASRFVVVLNAETGERINKIELGHEIDSINVSQDAEPLLYALSAGTQTLHIYDAATGEELRSVDQLGRGPQIITTHDMDS.

The N-terminal stretch at 1–31 is a signal peptide; that stretch reads MASARESTPRYLTLIGATLACSALALGAAQA. The segment at 32–64 is disordered; that stretch reads QTEPAEPEAPAETAAADAAGQTEGQRGAAEAAA. Cysteine 221 and cysteine 236 are disulfide-bonded.

Belongs to the aromatic amine dehydrogenase heavy chain family. Tetramer of two light and two heavy chains.

The protein resides in the periplasm. It carries out the reaction 2 oxidized [amicyanin] + methylamine + H2O = 2 reduced [amicyanin] + formaldehyde + NH4(+) + 2 H(+). In terms of biological role, methylamine dehydrogenase carries out the oxidation of methylamine. Electrons are passed from methylamine dehydrogenase to amicyanin. In Paracoccus versutus (Thiobacillus versutus), this protein is Methylamine dehydrogenase heavy chain (mauB).